Here is a 605-residue protein sequence, read N- to C-terminus: Phosphoenolpyruvate carboxykinase [GTP] (605 aa).

Substrate is bound by residues arginine 79 and 218-220 (YGG). Mn(2+)-binding residues include lysine 227 and histidine 247. Residue serine 269 coordinates substrate. 270–275 (ACGKTN) lines the GTP pocket. Cysteine 271 is an active-site residue. Residue aspartate 294 participates in Mn(2+) binding. A compositionally biased stretch (basic and acidic residues) spans 364-381 (LTDWKGRDWTPQSDEKAA). The segment at 364–385 (LTDWKGRDWTPQSDEKAAHPNS) is disordered. 384–386 (NSR) provides a ligand contact to substrate. GTP-binding positions include arginine 386, arginine 417, and 513–516 (FGEN).

The protein belongs to the phosphoenolpyruvate carboxykinase [GTP] family. As to quaternary structure, monomer. Mn(2+) serves as cofactor.

The protein localises to the cytoplasm. It catalyses the reaction oxaloacetate + GTP = phosphoenolpyruvate + GDP + CO2. Its pathway is carbohydrate biosynthesis; gluconeogenesis. In terms of biological role, catalyzes the conversion of oxaloacetate (OAA) to phosphoenolpyruvate (PEP), the rate-limiting step in the metabolic pathway that produces glucose from lactate and other precursors derived from the citric acid cycle. This chain is Phosphoenolpyruvate carboxykinase [GTP], found in Saccharopolyspora erythraea (strain ATCC 11635 / DSM 40517 / JCM 4748 / NBRC 13426 / NCIMB 8594 / NRRL 2338).